Reading from the N-terminus, the 414-residue chain is DNA primase small subunit PriS (414 aa).

Residues D98, D100, and D312 contribute to the active site.

The protein belongs to the eukaryotic-type primase small subunit family. As to quaternary structure, heterodimer of a small subunit (PriS) and a large subunit (PriL). The cofactor is Mg(2+). Requires Mn(2+) as cofactor.

Functionally, catalytic subunit of DNA primase, an RNA polymerase that catalyzes the synthesis of short RNA molecules used as primers for DNA polymerase during DNA replication. The small subunit contains the primase catalytic core and has DNA synthesis activity on its own. Binding to the large subunit stabilizes and modulates the activity, increasing the rate of DNA synthesis while decreasing the length of the DNA fragments, and conferring RNA synthesis capability. The DNA polymerase activity may enable DNA primase to also catalyze primer extension after primer synthesis. May also play a role in DNA repair. This chain is DNA primase small subunit PriS, found in Methanosarcina mazei (strain ATCC BAA-159 / DSM 3647 / Goe1 / Go1 / JCM 11833 / OCM 88) (Methanosarcina frisia).